The primary structure comprises 255 residues: 1-(5-phosphoribosyl)-5-[(5-phosphoribosylamino)methylideneamino] imidazole-4-carboxamide isomerase (255 aa).

D8 acts as the Proton acceptor in catalysis. The active-site Proton donor is D129.

Belongs to the HisA/HisF family.

The protein localises to the cytoplasm. It catalyses the reaction 1-(5-phospho-beta-D-ribosyl)-5-[(5-phospho-beta-D-ribosylamino)methylideneamino]imidazole-4-carboxamide = 5-[(5-phospho-1-deoxy-D-ribulos-1-ylimino)methylamino]-1-(5-phospho-beta-D-ribosyl)imidazole-4-carboxamide. It functions in the pathway amino-acid biosynthesis; L-histidine biosynthesis; L-histidine from 5-phospho-alpha-D-ribose 1-diphosphate: step 4/9. This chain is 1-(5-phosphoribosyl)-5-[(5-phosphoribosylamino)methylideneamino] imidazole-4-carboxamide isomerase, found in Prochlorococcus marinus (strain MIT 9313).